A 241-amino-acid chain; its full sequence is Parkin coregulated gene protein homolog (241 aa).

In terms of assembly, microtubule inner protein component of sperm flagellar doublet microtubules. Forms a large molecular chaperone complex containing heat shock proteins 70 and 90 and chaperonin components. Interacts with STIP1, PRKN, GPR37, HSPA8, TCP1/CCT1, CCT2, CCT3, CCT4, CCT5, CCT6A, CCT7 and CCT8. Interacts with MEIG1.

Its subcellular location is the cytoplasm. It is found in the cytoskeleton. It localises to the cilium axoneme. The protein localises to the flagellum axoneme. In terms of biological role, microtubule inner protein (MIP) part of the dynein-decorated doublet microtubules (DMTs) in cilia axoneme, which is required for motile cilia beating. Suppresses cell death induced by accumulation of unfolded Pael receptor (Pael-R, a substrate of Parkin). Facilitates the formation of inclusions consisting of Pael-R, molecular chaperones, protein degradation molecules and itself when proteasome is inhibited. May play an important role in the formation of Lewy bodies and protection of dopaminergic neurons against Parkinson disease. In Mus musculus (Mouse), this protein is Parkin coregulated gene protein homolog (Pacrg).